Consider the following 404-residue polypeptide: Cysteine desulfurase IscS (404 aa).

Pyridoxal 5'-phosphate is bound by residues 75–76, Asn155, Gln183, and 203–205; these read AT and SAH. N6-(pyridoxal phosphate)lysine is present on Lys206. Residue Thr243 coordinates pyridoxal 5'-phosphate. The active-site Cysteine persulfide intermediate is Cys328. Cys328 serves as a coordination point for [2Fe-2S] cluster.

It belongs to the class-V pyridoxal-phosphate-dependent aminotransferase family. NifS/IscS subfamily. In terms of assembly, homodimer. Forms a heterotetramer with IscU, interacts with other sulfur acceptors. Pyridoxal 5'-phosphate serves as cofactor.

It localises to the cytoplasm. The catalysed reaction is (sulfur carrier)-H + L-cysteine = (sulfur carrier)-SH + L-alanine. The protein operates within cofactor biosynthesis; iron-sulfur cluster biosynthesis. Functionally, master enzyme that delivers sulfur to a number of partners involved in Fe-S cluster assembly, tRNA modification or cofactor biosynthesis. Catalyzes the removal of elemental sulfur atoms from cysteine to produce alanine. Functions as a sulfur delivery protein for Fe-S cluster synthesis onto IscU, an Fe-S scaffold assembly protein, as well as other S acceptor proteins. The sequence is that of Cysteine desulfurase IscS from Neisseria gonorrhoeae (strain ATCC 700825 / FA 1090).